Reading from the N-terminus, the 202-residue chain is Na(+)-translocating NADH-quinone reductase subunit E (202 aa).

A run of 6 helical transmembrane segments spans residues 11–31, 35–55, 81–101, 114–134, 144–164, and 180–200; these read SVFI…FLAM, INAA…TVPA, FLSF…MEMV, GVFL…LFMV, VVYG…LAGI, and LGIT…FGGI.

The protein belongs to the NqrDE/RnfAE family. Composed of six subunits; NqrA, NqrB, NqrC, NqrD, NqrE and NqrF.

The protein localises to the cell inner membrane. It catalyses the reaction a ubiquinone + n Na(+)(in) + NADH + H(+) = a ubiquinol + n Na(+)(out) + NAD(+). Functionally, NQR complex catalyzes the reduction of ubiquinone-1 to ubiquinol by two successive reactions, coupled with the transport of Na(+) ions from the cytoplasm to the periplasm. NqrA to NqrE are probably involved in the second step, the conversion of ubisemiquinone to ubiquinol. In Cellvibrio japonicus (strain Ueda107) (Pseudomonas fluorescens subsp. cellulosa), this protein is Na(+)-translocating NADH-quinone reductase subunit E.